The sequence spans 323 residues: tRNA U34 carboxymethyltransferase (323 aa).

Carboxy-S-adenosyl-L-methionine is bound by residues Lys-91, Trp-105, Lys-110, Gly-130, 152–154 (DPT), 181–182 (IE), Met-196, Tyr-200, and Arg-315.

It belongs to the class I-like SAM-binding methyltransferase superfamily. CmoB family. In terms of assembly, homotetramer.

The enzyme catalyses carboxy-S-adenosyl-L-methionine + 5-hydroxyuridine(34) in tRNA = 5-carboxymethoxyuridine(34) in tRNA + S-adenosyl-L-homocysteine + H(+). Catalyzes carboxymethyl transfer from carboxy-S-adenosyl-L-methionine (Cx-SAM) to 5-hydroxyuridine (ho5U) to form 5-carboxymethoxyuridine (cmo5U) at position 34 in tRNAs. The chain is tRNA U34 carboxymethyltransferase from Shigella dysenteriae serotype 1 (strain Sd197).